Reading from the N-terminus, the 225-residue chain is Leucyl/phenylalanyl-tRNA--protein transferase (225 aa).

This sequence belongs to the L/F-transferase family.

It is found in the cytoplasm. It catalyses the reaction N-terminal L-lysyl-[protein] + L-leucyl-tRNA(Leu) = N-terminal L-leucyl-L-lysyl-[protein] + tRNA(Leu) + H(+). The catalysed reaction is N-terminal L-arginyl-[protein] + L-leucyl-tRNA(Leu) = N-terminal L-leucyl-L-arginyl-[protein] + tRNA(Leu) + H(+). It carries out the reaction L-phenylalanyl-tRNA(Phe) + an N-terminal L-alpha-aminoacyl-[protein] = an N-terminal L-phenylalanyl-L-alpha-aminoacyl-[protein] + tRNA(Phe). Its function is as follows. Functions in the N-end rule pathway of protein degradation where it conjugates Leu, Phe and, less efficiently, Met from aminoacyl-tRNAs to the N-termini of proteins containing an N-terminal arginine or lysine. This Nitrobacter hamburgensis (strain DSM 10229 / NCIMB 13809 / X14) protein is Leucyl/phenylalanyl-tRNA--protein transferase.